Reading from the N-terminus, the 343-residue chain is Holliday junction branch migration complex subunit RuvB (343 aa).

Positions 1-186 (MVMARKSDTL…FQIQERLEYY (186 aa)) are large ATPase domain (RuvB-L). Residues Leu-25, Arg-26, Gly-67, Lys-70, Thr-71, Ser-72, 133-135 (EDF), Arg-176, Tyr-186, and Arg-223 each bind ATP. Thr-71 provides a ligand contact to Mg(2+). The interval 187-257 (DAKALESILH…LAQKSLDRLG (71 aa)) is small ATPAse domain (RuvB-S). Residues 260–343 (ASGLDSMDRK…PPPTPQGSLF (84 aa)) are head domain (RuvB-H). 3 residues coordinate DNA: Arg-296, Arg-315, and Arg-320.

It belongs to the RuvB family. Homohexamer. Forms an RuvA(8)-RuvB(12)-Holliday junction (HJ) complex. HJ DNA is sandwiched between 2 RuvA tetramers; dsDNA enters through RuvA and exits via RuvB. An RuvB hexamer assembles on each DNA strand where it exits the tetramer. Each RuvB hexamer is contacted by two RuvA subunits (via domain III) on 2 adjacent RuvB subunits; this complex drives branch migration. In the full resolvosome a probable DNA-RuvA(4)-RuvB(12)-RuvC(2) complex forms which resolves the HJ.

Its subcellular location is the cytoplasm. It carries out the reaction ATP + H2O = ADP + phosphate + H(+). Functionally, the RuvA-RuvB-RuvC complex processes Holliday junction (HJ) DNA during genetic recombination and DNA repair, while the RuvA-RuvB complex plays an important role in the rescue of blocked DNA replication forks via replication fork reversal (RFR). RuvA specifically binds to HJ cruciform DNA, conferring on it an open structure. The RuvB hexamer acts as an ATP-dependent pump, pulling dsDNA into and through the RuvAB complex. RuvB forms 2 homohexamers on either side of HJ DNA bound by 1 or 2 RuvA tetramers; 4 subunits per hexamer contact DNA at a time. Coordinated motions by a converter formed by DNA-disengaged RuvB subunits stimulates ATP hydrolysis and nucleotide exchange. Immobilization of the converter enables RuvB to convert the ATP-contained energy into a lever motion, pulling 2 nucleotides of DNA out of the RuvA tetramer per ATP hydrolyzed, thus driving DNA branch migration. The RuvB motors rotate together with the DNA substrate, which together with the progressing nucleotide cycle form the mechanistic basis for DNA recombination by continuous HJ branch migration. Branch migration allows RuvC to scan DNA until it finds its consensus sequence, where it cleaves and resolves cruciform DNA. The protein is Holliday junction branch migration complex subunit RuvB of Myxococcus xanthus (strain DK1622).